We begin with the raw amino-acid sequence, 298 residues long: HTH-type transcriptional regulator ArgP (298 aa).

The region spanning 4-60 (LDYKWIEALDAVVAQGGFERAAEELYISQSAVSQRIKQLERFLAQSVLIREQPPKPT) is the HTH lysR-type domain. A DNA-binding region (H-T-H motif) is located at residues 21 to 40 (FERAAEELYISQSAVSQRIK).

The protein belongs to the LysR transcriptional regulatory family. In terms of assembly, homodimer.

Functionally, controls the transcription of genes involved in arginine and lysine metabolism. The sequence is that of HTH-type transcriptional regulator ArgP from Vibrio vulnificus (strain YJ016).